Consider the following 196-residue polypeptide: ATP-dependent Clp protease proteolytic subunit (196 aa).

Catalysis depends on Ser-98, which acts as the Nucleophile. Residue His-123 is part of the active site.

The protein belongs to the peptidase S14 family. Fourteen ClpP subunits assemble into 2 heptameric rings which stack back to back to give a disk-like structure with a central cavity, resembling the structure of eukaryotic proteasomes.

The protein resides in the cytoplasm. The enzyme catalyses Hydrolysis of proteins to small peptides in the presence of ATP and magnesium. alpha-casein is the usual test substrate. In the absence of ATP, only oligopeptides shorter than five residues are hydrolyzed (such as succinyl-Leu-Tyr-|-NHMec, and Leu-Tyr-Leu-|-Tyr-Trp, in which cleavage of the -Tyr-|-Leu- and -Tyr-|-Trp bonds also occurs).. Cleaves peptides in various proteins in a process that requires ATP hydrolysis. Has a chymotrypsin-like activity. Plays a major role in the degradation of misfolded proteins. The chain is ATP-dependent Clp protease proteolytic subunit from Lactiplantibacillus plantarum (strain ATCC BAA-793 / NCIMB 8826 / WCFS1) (Lactobacillus plantarum).